Here is a 133-residue protein sequence, read N- to C-terminus: Large ribosomal subunit protein uL15 (133 aa).

Positions 1-64 are disordered; it reads MGLENLKPAK…QPLQRRLPKI (64 aa).

Belongs to the universal ribosomal protein uL15 family. As to quaternary structure, part of the 50S ribosomal subunit.

Binds to the 23S rRNA. In Helicobacter pylori (strain J99 / ATCC 700824) (Campylobacter pylori J99), this protein is Large ribosomal subunit protein uL15.